The primary structure comprises 880 residues: MALRRSMGWPGLRPLLLAGLASLLLPGSAAAGLKLMGAPVKMTVSQGQPVKLNCSVEGMEDPDIHWMKDGTVVQNASQVSISISEHSWIGLLSLKSVERSDAGLYWCQVKDGEETKISQSVWLTVEGVPFFTVEPKDLAVPPNAPFQLSCEAVGPPEPVTIYWWRGLTKVGGPAPSPSVLNVTGVTQRTEFSCEARNIKGLATSRPAIVRLQAPPAAPFNTTVTTISSYNASVAWVPGADGLALLHSCTVQVAHAPGEWEALAVVVPVPPFTCLLRNLAPATNYSLRVRCANALGPSPYGDWVPFQTKGLAPARAPQNFHAIRTDSGLILEWEEVIPEDPGEGPLGPYKLSWVQENGTQDELMVEGTRANLTDWDPQKDLILRVCASNAIGDGPWSQPLVVSSHDHAGRQGPPHSRTSWVPVVLGVLTALITAAALALILLRKRRKETRFGQAFDSVMARGEPAVHFRAARSFNRERPERIEATLDSLGISDELKEKLEDVLIPEQQFTLGRMLGKGEFGSVREAQLKQEDGSFVKVAVKMLKADIIASSDIEEFLREAACMKEFDHPHVAKLVGVSLRSRAKGRLPIPMVILPFMKHGDLHAFLLASRIGENPFNLPLQTLVRFMVDIACGMEYLSSRNFIHRDLAARNCMLAEDMTVCVADFGLSRKIYSGDYYRQGCASKLPVKWLALESLADNLYTVHSDVWAFGVTMWEIMTRGQTPYAGIENAEIYNYLIGGNRLKQPPECMEEVYDLMYQCWSADPKQRPSFTCLRMELENILGHLSVLSTSQDPLYINIERAEQPTESGSPEVHCGERSSSEAGDGSGVGAVGGIPSDSRYIFSPGGLSESPGQLEQQPESPLNENQRLLLLQQGLLPHSSC.

A signal peptide spans 1-30 (MALRRSMGWPGLRPLLLAGLASLLLPGSAA). Ig-like C2-type domains lie at 31–118 (AGLK…TKIS) and 129–209 (PFFT…PAIV). Residues 31–419 (AGLKLMGAPV…QGPPHSRTSW (389 aa)) lie on the Extracellular side of the membrane. N-linked (GlcNAc...) asparagine glycans are attached at residues asparagine 53, asparagine 75, asparagine 181, asparagine 220, asparagine 230, asparagine 283, asparagine 356, and asparagine 370. Disulfide bonds link cysteine 54–cysteine 107 and cysteine 150–cysteine 193. 2 Fibronectin type-III domains span residues 217-310 (APFN…TKGL) and 315-406 (APQN…SHDH). Residues 420-440 (VPVVLGVLTALITAAALALIL) form a helical membrane-spanning segment. The Cytoplasmic segment spans residues 441–880 (LRKRRKETRF…QQGLLPHSSC (440 aa)). Phosphoserine is present on serine 456. The 278-residue stretch at 508-785 (FTLGRMLGKG…LENILGHLSV (278 aa)) folds into the Protein kinase domain. Residues 514–522 (LGKGEFGSV) and lysine 540 contribute to the ATP site. Catalysis depends on aspartate 645, which acts as the Proton acceptor. Residues tyrosine 671, tyrosine 675, tyrosine 676, and tyrosine 794 each carry the phosphotyrosine; by autocatalysis modification. The disordered stretch occupies residues 800 to 864 (AEQPTESGSP…QQPESPLNEN (65 aa)). Serine 808 and serine 859 each carry phosphoserine. Over residues 849 to 864 (SPGQLEQQPESPLNEN) the composition is skewed to polar residues.

The protein belongs to the protein kinase superfamily. Tyr protein kinase family. AXL/UFO subfamily. As to quaternary structure, monomer and homodimer. Interacts (via N-terminus) with extracellular ligands TULP1 and GAS6. Interacts with PIK3R1; this interaction increases PI3-kinase activity. Post-translationally, autophosphorylated. Abundant in the brain and lower levels in other tissues.

The protein localises to the cell membrane. It carries out the reaction L-tyrosyl-[protein] + ATP = O-phospho-L-tyrosyl-[protein] + ADP + H(+). Its function is as follows. Receptor tyrosine kinase that transduces signals from the extracellular matrix into the cytoplasm by binding to several ligands including TULP1 or GAS6. Regulates many physiological processes including cell survival, migration and differentiation. Ligand binding at the cell surface induces dimerization and autophosphorylation of TYRO3 on its intracellular domain that provides docking sites for downstream signaling molecules. Following activation by ligand, interacts with PIK3R1 and thereby enhances PI3-kinase activity. Activates the AKT survival pathway, including nuclear translocation of NF-kappa-B and up-regulation of transcription of NF-kappa-B-regulated genes. TYRO3 signaling plays a role in various processes such as neuron protection from excitotoxic injury, platelet aggregation and cytoskeleton reorganization. Also plays an important role in inhibition of Toll-like receptors (TLRs)-mediated innate immune response by activating STAT1, which selectively induces production of suppressors of cytokine signaling SOCS1 and SOCS3. The chain is Tyrosine-protein kinase receptor TYRO3 (Tyro3) from Mus musculus (Mouse).